Consider the following 263-residue polypeptide: Polyglutamine-binding protein 1 (263 aa).

Positions 46 to 80 (EGLPPSWYKVFDPSCGLPYYWNVETDLVSWLSPHD) constitute a WW domain. The tract at residues 94 to 263 (NNNADAEDKS…AEASRTKQQD (170 aa)) is disordered. The segment covering 99-173 (AEDKSDRNLE…DKADREEGKD (75 aa)) has biased composition (basic and acidic residues). The stretch at 104 to 110 (DRNLEKV) is one 1-1; approximate repeat. Positions 104-138 (DRNLEKVDRNHEKSDRSHEKPDRSHEKADRNHEKN) are 5 X 7 AA approximate tandem repeats of D-R-[NS]-H-E-K-S. The 1-2 repeat unit spans residues 111–117 (DRNHEKS). The 1-3; approximate repeat unit spans residues 118 to 124 (DRSHEKP). The stretch at 125-131 (DRSHEKA) is one 1-4; approximate repeat. One copy of the 1-5; approximate repeat lies at 132–138 (DRNHEKN). 9 tandem repeats follow at residues 139 to 140 (DR), 141 to 142 (ER), 143 to 144 (ER), 150 to 151 (DR), 152 to 153 (ER), 154 to 155 (DR), 156 to 157 (DR), 158 to 159 (ER), and 160 to 161 (ER). Positions 139-144 (DRERER) are 3 X 2 AA tandem repeats of [DE]-R. The segment at 150 to 161 (DRERDRDRERER) is 6 X 2 AA tandem repeats of [DE]-R. The segment at 243 to 253 (YPSPGAVLRAN) is important for interaction with TXNL4A. Ser-245 carries the phosphoserine modification.

As to quaternary structure, interacts with POU3F2/Brn-2, ATXN1, TXNL4A, HTT and AR. Interaction with ATXN1 correlates positively with the length of the polyglutamine tract. Interacts with RNA polymerase II large subunit in a phosphorylation-dependent manner. Forms a ternary complex with ATXN1 mutant and phosphorylated RNA polymerase II. Interacts (via C-terminus) with TXNL4A and CD2BP2. Interacts (via WW domain) with ATN1 and SF3B1, and may interact with additional splice factors. Interacts (via WW domain) with WBP11; Leading to reduce interaction between PQBP1 and TXNL4A. Interacts with CAPRIN1. Interacts with DDX1. Interacts with SFPQ. Interacts with KHSRP. Detected in brain cortex and hippocampus neurons (at protein level). Expressed in brain with high level in cerebellar cortex, hippocampus and olfactory bulb.

The protein resides in the nucleus. Its subcellular location is the nucleus speckle. It localises to the cytoplasmic granule. Functionally, intrinsically disordered protein that acts as a scaffold, and which is involved in different processes, such as pre-mRNA splicing, transcription regulation, innate immunity and neuron development. Interacts with splicing-related factors via the intrinsically disordered region and regulates alternative splicing of target pre-mRNA species. May suppress the ability of POU3F2 to transactivate the DRD1 gene in a POU3F2 dependent manner. Can activate transcription directly or via association with the transcription machinery. May be involved in ATXN1 mutant-induced cell death. The interaction with ATXN1 mutant reduces levels of phosphorylated RNA polymerase II large subunit. Involved in the assembly of cytoplasmic stress granule, possibly by participating in the transport of neuronal RNA granules. Also acts as an innate immune sensor of infection by retroviruses, by detecting the presence of reverse-transcribed DNA in the cytosol. Directly binds retroviral reverse-transcribed DNA in the cytosol and interacts with CGAS, leading to activate the cGAS-STING signaling pathway, triggering type-I interferon production. In Mus musculus (Mouse), this protein is Polyglutamine-binding protein 1 (Pqbp1).